The chain runs to 133 residues: FPRL1 inhibitory protein (133 aa).

Positions 1-28 are cleaved as a signal peptide; that stretch reads MKKNITKTIIASTVIAAGLLTQTNDAKA.

The protein belongs to the CHIPS/FLIPr family.

It is found in the secreted. Its function is as follows. May be involved in countering the first line of host defense mechanisms. Impairs the leukocyte response to FPRL1 agonists by binding directly to host FPRL1. The protein is FPRL1 inhibitory protein (flr) of Staphylococcus aureus (strain Mu50 / ATCC 700699).